A 250-amino-acid chain; its full sequence is Small ribosomal subunit protein uS3z (250 aa).

One can recognise a KH type-2 domain in the interval 21 to 92 (LNEVLTRELA…SVELYAEKVN (72 aa)).

The protein belongs to the universal ribosomal protein uS3 family. Interacts with SNRNP35.

In Arabidopsis thaliana (Mouse-ear cress), this protein is Small ribosomal subunit protein uS3z (RPS3A).